The primary structure comprises 461 residues: D-phenylhydantoinase (461 aa).

The a divalent metal cation site is built by H59, H61, and K151. K151 carries the post-translational modification N6-carboxylysine. Residue Y156 participates in substrate binding. Residues H182 and H239 each coordinate a divalent metal cation. S286 contributes to the substrate binding site. D313 contacts a divalent metal cation. N335 lines the substrate pocket.

This sequence belongs to the metallo-dependent hydrolases superfamily. Hydantoinase/dihydropyrimidinase family. As to quaternary structure, homotetramer. A divalent metal cation is required as a cofactor. In terms of processing, carboxylation allows a single lysine to coordinate two divalent metal cations.

The catalysed reaction is D-5-phenylhydantoin + H2O = N-carbamoyl-D-phenylglycine + H(+). Catalyzes the stereospecific hydrolysis of the cyclic amide bond of D-hydantoin derivatives with an aromatic side chains at the 5'-position. Has no activity on dihydropyrimidines. The physiological function is unknown. The chain is D-phenylhydantoinase from Escherichia coli O7:K1 (strain IAI39 / ExPEC).